Reading from the N-terminus, the 239-residue chain is Purine nucleoside phosphorylase DeoD-type (239 aa).

Histidine 5 is an a purine D-ribonucleoside binding site. Residues glycine 21 and arginine 25 each coordinate phosphate. The residue at position 27 (lysine 27) is an N6-acetyllysine. Residues arginine 44 and 88 to 91 (RVGS) contribute to the phosphate site. A purine D-ribonucleoside is bound by residues 180–182 (EME) and 204–205 (SD). Aspartate 205 functions as the Proton donor in the catalytic mechanism.

This sequence belongs to the PNP/UDP phosphorylase family. In terms of assembly, homohexamer; trimer of homodimers.

It catalyses the reaction a purine D-ribonucleoside + phosphate = a purine nucleobase + alpha-D-ribose 1-phosphate. The enzyme catalyses a purine 2'-deoxy-D-ribonucleoside + phosphate = a purine nucleobase + 2-deoxy-alpha-D-ribose 1-phosphate. Its function is as follows. Catalyzes the reversible phosphorolytic breakdown of the N-glycosidic bond in the beta-(deoxy)ribonucleoside molecules, with the formation of the corresponding free purine bases and pentose-1-phosphate. This chain is Purine nucleoside phosphorylase DeoD-type, found in Escherichia coli O8 (strain IAI1).